We begin with the raw amino-acid sequence, 968 residues long: uncharacterized protein (968 aa).

Positions 1–27 (MHSWKKKLVVSQLALACTLAITSQANA) are cleaved as a signal peptide. An Autotransporter domain is found at 703-968 (GLADNGGAWV…SANVGVKYTW (266 aa)).

This is an uncharacterized protein from Escherichia coli (strain K12).